The chain runs to 397 residues: Acetate kinase 1 (397 aa).

Residue asparagine 8 participates in Mg(2+) binding. Lysine 15 is a binding site for ATP. Arginine 89 contributes to the substrate binding site. Aspartate 146 functions as the Proton donor/acceptor in the catalytic mechanism. ATP is bound by residues 206–210, 281–283, and 329–333; these read HLGNG, DLR, and GIGEN. Glutamate 382 is a Mg(2+) binding site.

It belongs to the acetokinase family. Homodimer. Mg(2+) serves as cofactor. Mn(2+) is required as a cofactor.

Its subcellular location is the cytoplasm. It carries out the reaction acetate + ATP = acetyl phosphate + ADP. The protein operates within metabolic intermediate biosynthesis; acetyl-CoA biosynthesis; acetyl-CoA from acetate: step 1/2. In terms of biological role, catalyzes the formation of acetyl phosphate from acetate and ATP. Can also catalyze the reverse reaction. The chain is Acetate kinase 1 from Listeria monocytogenes serovar 1/2a (strain ATCC BAA-679 / EGD-e).